Here is a 261-residue protein sequence, read N- to C-terminus: tRNA (guanine-N(7)-)-methyltransferase (261 aa).

S-adenosyl-L-methionine-binding residues include E75, E100, D127, and D150. D150 is an active-site residue. K154 contributes to the substrate binding site. An interaction with RNA region spans residues R156–R161. Residues D186 and T223–E226 contribute to the substrate site.

It belongs to the class I-like SAM-binding methyltransferase superfamily. TrmB family.

It carries out the reaction guanosine(46) in tRNA + S-adenosyl-L-methionine = N(7)-methylguanosine(46) in tRNA + S-adenosyl-L-homocysteine. The protein operates within tRNA modification; N(7)-methylguanine-tRNA biosynthesis. Functionally, catalyzes the formation of N(7)-methylguanine at position 46 (m7G46) in tRNA. The polypeptide is tRNA (guanine-N(7)-)-methyltransferase (Xanthomonas axonopodis pv. citri (strain 306)).